Consider the following 217-residue polypeptide: NADPH-dependent 3-demethoxyubiquinone 3-hydroxylase, mitochondrial (217 aa).

The transit peptide at 1-34 (MSCARALAACCLWRLRTGALQPLSAYGRRISVRF) directs the protein to the mitochondrion. 2 consecutive repeat copies span residues 48–129 (AVDR…TALL) and 130–217 (GKEG…SERL). The interval 48 to 217 (AVDRIIRVDH…KVAIYLSERL (170 aa)) is 2 X approximate tandem repeats. An NADH-binding site is contributed by Arg-51. 6 residues coordinate Fe cation: Glu-60, Glu-90, His-93, Glu-142, Glu-178, and His-181. Positions 208, 212, and 216 each coordinate NADH.

This sequence belongs to the COQ7 family. As to quaternary structure, component of a multi-subunit COQ enzyme complex. Interacts with COQ8B and COQ6. Interacts with COQ9. Fe cation serves as cofactor.

It localises to the mitochondrion inner membrane. The enzyme catalyses a 5-methoxy-2-methyl-3-(all-trans-polyprenyl)benzoquinone + NADH + O2 = a 3-demethylubiquinone + NAD(+) + H2O. It participates in cofactor biosynthesis; ubiquinone biosynthesis. Functionally, catalyzes the hydroxylation of the 5-methoxy-2-methyl-3-(all-trans-polyprenyl)benzoquinone at the C6 position and participates in the biosynthesis of ubiquinone. Catalyzes the reaction through a substrate-mediated reduction pathway, whereby NADH shuttles electrons to 5-methoxy-2-methyl-3-(all-trans-decaprenyl)benzoquinone, which then transfers the electrons to the two Fe(3+) centers. The binding of 5-methoxy-2-methyl-3-(all-trans-polyprenyl)benzoquinone (DMQn) mediates reduction of the diiron center by nicotinamide adenine dinucleotide (NADH) and initiates oxygen activation for subsequent DMQ hydroxylation. The physiological substrates are 5-methoxy-2-methyl-3-(all-trans-nonaprenyl)benzoquinone (DMQ(9)) and 5-methoxy-2-methyl-3-(all-trans-decaprenyl)benzoquinone (DMQ(10)), however in vitro the enzyme does not have any specificity concerning the length of the polyprenyl tail, and accepts tails of various lengths with similar efficiency. Also has a structural role in the COQ enzyme complex, stabilizing other COQ polypeptides. Involved in lifespan determination in a ubiquinone-independent manner. Plays a role in modulating mitochondrial stress responses, acting in the nucleus, perhaps via regulating gene expression, independent of its characterized mitochondrial function in ubiquinone biosynthesis. In Bos taurus (Bovine), this protein is NADPH-dependent 3-demethoxyubiquinone 3-hydroxylase, mitochondrial.